We begin with the raw amino-acid sequence, 1796 residues long: U3 small nucleolar RNA-associated protein 10 (1796 aa).

HEAT repeat units lie at residues 586–623, 656–692, 861–898, 983–1021, 1052–1089, 1161–1198, 1258–1295, 1302–1340, 1344–1383, 1492–1529, 1711–1748, and 1752–1789; these read LDLQAMIPYCVAALSDPAKKVRQAAADLITVLSKSNAE, LLQEIIVPALEESVLDEEHISNVLRSHLQSTKDSATG, DLTTNILNAFLESLQDIPKITTDSPATKRRRTSSSDHS, DTSVGHGDVLVQCIQKSSSPAVQNSALLLVASLANTAPD, QTIKEVIPPLVETFRKSRRNLVTSAAELLSSFVIAYEH, QPKPTLAATLFNRNTDDDQDLHKTALKELTLLPKVLSS, LSIGEFIKAVENLLDRPSISLRQKVLRTLEVRVDQESN, TVLLAFLPQLTAVIRDSDDIAYKHTAVACVDKIAEKYGK, EAVAAAATTIAGDCCLGQPDKRLRVMALLCLASLVDVLQD, SAVEEYLKLLATVLDKHPSTIIAKHISTLSTIFLSALD, DHRKELNAAVLRRLRSPSASVRLAAVRCEQSLTDTLGE, and EMLSEMLPYISELQDDDDEDVEKETHRWITKIEAILGE. The tract at residues 881–901 is disordered; the sequence is TTDSPATKRRRTSSSDHSRGV.

Belongs to the HEATR1/UTP10 family. In terms of assembly, component of the ribosomal small subunit (SSU) processome.

The protein localises to the nucleus. It localises to the nucleolus. Involved in nucleolar processing of pre-18S ribosomal RNA. Involved in ribosome biosynthesis. This is U3 small nucleolar RNA-associated protein 10 from Pyricularia oryzae (strain 70-15 / ATCC MYA-4617 / FGSC 8958) (Rice blast fungus).